The primary structure comprises 371 residues: 4-hydroxy-3-methylbut-2-en-1-yl diphosphate synthase (flavodoxin) (371 aa).

[4Fe-4S] cluster contacts are provided by Cys-270, Cys-273, Cys-305, and Glu-312.

The protein belongs to the IspG family. [4Fe-4S] cluster serves as cofactor.

The enzyme catalyses (2E)-4-hydroxy-3-methylbut-2-enyl diphosphate + oxidized [flavodoxin] + H2O + 2 H(+) = 2-C-methyl-D-erythritol 2,4-cyclic diphosphate + reduced [flavodoxin]. It participates in isoprenoid biosynthesis; isopentenyl diphosphate biosynthesis via DXP pathway; isopentenyl diphosphate from 1-deoxy-D-xylulose 5-phosphate: step 5/6. Its function is as follows. Converts 2C-methyl-D-erythritol 2,4-cyclodiphosphate (ME-2,4cPP) into 1-hydroxy-2-methyl-2-(E)-butenyl 4-diphosphate. The protein is 4-hydroxy-3-methylbut-2-en-1-yl diphosphate synthase (flavodoxin) of Shewanella pealeana (strain ATCC 700345 / ANG-SQ1).